A 99-amino-acid polypeptide reads, in one-letter code: MKSLLFVTIAVYFVAQAVTANLLSNFLGSSLIDDDKGNMHKLYKRSEDQCIGRSCTCDTSSTSCCPYAACRCNLWKTSCKCQRTGRKWATPCKEIYSPN.

The signal sequence occupies residues 1 to 19 (MKSLLFVTIAVYFVAQAVT). The propeptide occupies 20–45 (ANLLSNFLGSSLIDDDKGNMHKLYKR).

This sequence belongs to the neurotoxin 02 (plectoxin) family. Contains 5 disulfide bonds. In terms of tissue distribution, expressed by the venom gland.

The protein localises to the secreted. The sequence is that of U8-agatoxin-Ao1a from Agelena orientalis (Funnel-web spider).